The primary structure comprises 347 residues: uncharacterized protein (347 aa).

The segment at 5-44 (CTICHNTPNRPVRLDCNHEFCYICIKGSIQNDMLNCAVCR) adopts an RING-type zinc-finger fold. Positions 244–321 (NVQANFNVAR…NLDAWRQIKR (78 aa)) constitute a WWE domain.

This is an uncharacterized protein from Caenorhabditis elegans.